The primary structure comprises 466 residues: Cysteine--tRNA ligase (466 aa).

Cys-27 provides a ligand contact to Zn(2+). A 'HIGH' region motif is present at residues 29-39; the sequence is PTVYNFFHIGN. Cys-207, His-232, and Glu-236 together coordinate Zn(2+). Residues 264 to 268 carry the 'KMSKS' region motif; that stretch reads KMSKS. Lys-267 is a binding site for ATP.

This sequence belongs to the class-I aminoacyl-tRNA synthetase family. As to quaternary structure, monomer. Zn(2+) serves as cofactor.

The protein localises to the cytoplasm. It carries out the reaction tRNA(Cys) + L-cysteine + ATP = L-cysteinyl-tRNA(Cys) + AMP + diphosphate. This chain is Cysteine--tRNA ligase, found in Clostridium beijerinckii (strain ATCC 51743 / NCIMB 8052) (Clostridium acetobutylicum).